Consider the following 307-residue polypeptide: Ribonuclease Z (307 aa).

7 residues coordinate Zn(2+): His-63, His-65, Asp-67, His-68, His-141, Asp-212, and His-270. Asp-67 serves as the catalytic Proton acceptor.

Belongs to the RNase Z family. As to quaternary structure, homodimer. Requires Zn(2+) as cofactor.

The enzyme catalyses Endonucleolytic cleavage of RNA, removing extra 3' nucleotides from tRNA precursor, generating 3' termini of tRNAs. A 3'-hydroxy group is left at the tRNA terminus and a 5'-phosphoryl group is left at the trailer molecule.. Functionally, zinc phosphodiesterase, which displays some tRNA 3'-processing endonuclease activity. Probably involved in tRNA maturation, by removing a 3'-trailer from precursor tRNA. The chain is Ribonuclease Z from Bacillus cereus (strain ZK / E33L).